The following is a 351-amino-acid chain: Probable cobalt-factor III C(17)-methyltransferase (351 aa).

This sequence belongs to the precorrin methyltransferase family.

The enzyme catalyses Co(II)-factor III + S-adenosyl-L-methionine + H(+) = Co(II)-factor IV + S-adenosyl-L-homocysteine. It functions in the pathway cofactor biosynthesis; adenosylcobalamin biosynthesis; cob(II)yrinate a,c-diamide from sirohydrochlorin (anaerobic route): step 3/10. Its function is as follows. Methyltransferase that likely catalyzes the ring contraction and methylation of C-17 in cobalt-factor III to form cobalt-factor IV. May also convert cobalt-precorrin-3 to cobalt-precorrin-4. The chain is Probable cobalt-factor III C(17)-methyltransferase (cbiH) from Methanothermobacter thermautotrophicus (strain ATCC 29096 / DSM 1053 / JCM 10044 / NBRC 100330 / Delta H) (Methanobacterium thermoautotrophicum).